Consider the following 363-residue polypeptide: G kinase-anchoring protein 1-B (363 aa).

Disordered regions lie at residues 17-79 (ALLK…RNLA) and 147-182 (VNGD…VPLK). A coiled-coil region spans residues 50 to 79 (KTNVNEKKKEKRRKKKEQQQSEANELRNLA). Over residues 160 to 170 (KVNKKDKRKNN) the composition is skewed to basic residues. Coiled-coil stretches lie at residues 249-298 (DGKT…QEGE) and 328-348 (AALE…VRYQ).

The protein belongs to the GKAP1 family.

The protein localises to the golgi apparatus. In terms of biological role, may play a role in the regulation of insulin-dependent IRS1 tyrosine phosphorylation in adipocytes. The polypeptide is G kinase-anchoring protein 1-B (gkap1-b) (Xenopus laevis (African clawed frog)).